Reading from the N-terminus, the 393-residue chain is S-adenosylmethionine synthase (393 aa).

His17 contributes to the ATP binding site. Position 19 (Asp19) interacts with Mg(2+). Glu45 lines the K(+) pocket. The L-methionine site is built by Glu58 and Gln104. A flexible loop region spans residues 104 to 114 (QSAEIAQGVEE). ATP is bound by residues 171–173 (DAK), Asp245, 251–252 (RK), Ala268, and Lys272. Residue Asp245 coordinates L-methionine. Lys276 contributes to the L-methionine binding site.

Belongs to the AdoMet synthase family. In terms of assembly, homotetramer; dimer of dimers. Requires Mg(2+) as cofactor. It depends on K(+) as a cofactor.

It localises to the cytoplasm. It catalyses the reaction L-methionine + ATP + H2O = S-adenosyl-L-methionine + phosphate + diphosphate. Its pathway is amino-acid biosynthesis; S-adenosyl-L-methionine biosynthesis; S-adenosyl-L-methionine from L-methionine: step 1/1. Functionally, catalyzes the formation of S-adenosylmethionine (AdoMet) from methionine and ATP. The overall synthetic reaction is composed of two sequential steps, AdoMet formation and the subsequent tripolyphosphate hydrolysis which occurs prior to release of AdoMet from the enzyme. The protein is S-adenosylmethionine synthase of Hyphomonas neptunium (strain ATCC 15444).